The primary structure comprises 120 residues: Immunoglobulin kappa variable 2D-26 (120 aa).

Residues 1–20 form the signal peptide; that stretch reads MRLPAQLLGLLMLWVPGSSA. Positions 21-43 are framework-1; that stretch reads EIVMTQTPLSLSITPGEQASMSC. The 100-residue stretch at 21–120 folds into the Ig-like domain; that stretch reads EIVMTQTPLS…YYCMQDAQDP (100 aa). A disulfide bridge links Cys-43 with Cys-113. The segment at 44–59 is complementarity-determining-1; it reads RSSQSLLHSDGYTYLY. The tract at residues 60–74 is framework-2; the sequence is WFLQKARPVSTLLIY. Residues 75–81 form a complementarity-determining-2 region; it reads EVSNRFS. Positions 82 to 113 are framework-3; it reads GVPDRFSGSGSGTDFTLKISRVEAEDFGVYYC. Residues 114–120 form a complementarity-determining-3 region; that stretch reads MQDAQDP.

In terms of assembly, immunoglobulins are composed of two identical heavy chains and two identical light chains; disulfide-linked.

It is found in the secreted. The protein localises to the cell membrane. Its function is as follows. V region of the variable domain of immunoglobulin light chains that participates in the antigen recognition. Immunoglobulins, also known as antibodies, are membrane-bound or secreted glycoproteins produced by B lymphocytes. In the recognition phase of humoral immunity, the membrane-bound immunoglobulins serve as receptors which, upon binding of a specific antigen, trigger the clonal expansion and differentiation of B lymphocytes into immunoglobulins-secreting plasma cells. Secreted immunoglobulins mediate the effector phase of humoral immunity, which results in the elimination of bound antigens. The antigen binding site is formed by the variable domain of one heavy chain, together with that of its associated light chain. Thus, each immunoglobulin has two antigen binding sites with remarkable affinity for a particular antigen. The variable domains are assembled by a process called V-(D)-J rearrangement and can then be subjected to somatic hypermutations which, after exposure to antigen and selection, allow affinity maturation for a particular antigen. The chain is Immunoglobulin kappa variable 2D-26 from Homo sapiens (Human).